Consider the following 321-residue polypeptide: Small ribosomal subunit protein mS43 (321 aa).

Residues 1–13 (MLRFTGARAIRKY) constitute a mitochondrion transit peptide.

It belongs to the mitochondrion-specific ribosomal protein mS43 family. In terms of assembly, component of the mitochondrial small ribosomal subunit (mt-SSU). Mature yeast 74S mitochondrial ribosomes consist of a small (37S) and a large (54S) subunit. The 37S small subunit contains a 15S ribosomal RNA (15S mt-rRNA) and 34 different proteins. The 54S large subunit contains a 21S rRNA (21S mt-rRNA) and 46 different proteins. mS43 forms a heterodimer with mS42, building a large protuberance adjacent to the mRNA channel exit in the mt-SSU body.

It is found in the mitochondrion. Component of the mitochondrial ribosome (mitoribosome), a dedicated translation machinery responsible for the synthesis of mitochondrial genome-encoded proteins, including at least some of the essential transmembrane subunits of the mitochondrial respiratory chain. The mitoribosomes are attached to the mitochondrial inner membrane and translation products are cotranslationally integrated into the membrane. The polypeptide is Small ribosomal subunit protein mS43 (MRP1) (Saccharomyces cerevisiae (strain ATCC 204508 / S288c) (Baker's yeast)).